Here is a 487-residue protein sequence, read N- to C-terminus: UDP-N-acetylmuramate--L-alanine ligase (487 aa).

124–130 (GTHGKTT) provides a ligand contact to ATP.

The protein belongs to the MurCDEF family.

The protein localises to the cytoplasm. It catalyses the reaction UDP-N-acetyl-alpha-D-muramate + L-alanine + ATP = UDP-N-acetyl-alpha-D-muramoyl-L-alanine + ADP + phosphate + H(+). The protein operates within cell wall biogenesis; peptidoglycan biosynthesis. Its function is as follows. Cell wall formation. This Acaryochloris marina (strain MBIC 11017) protein is UDP-N-acetylmuramate--L-alanine ligase.